Reading from the N-terminus, the 417-residue chain is Phosphoglycerate kinase 2 (417 aa).

(2R)-3-phosphoglycerate-binding residues include V23, D24, F25, N26, N38, R39, S62, H63, G65, R66, L121, R122, H168, and R169. G212 lines the ADP pocket. G212 is a CDP binding site. AMP-binding residues include A213 and K214. Residue A213 participates in ATP binding. A213 serves as a coordination point for Mg(2+). CDP is bound at residue D217. A Mg(2+)-binding site is contributed by D217. Position 218 (K218) interacts with AMP. Position 218 (K218) interacts with ATP. An ADP-binding site is contributed by G236. G236 is a CDP binding site. AMP-binding residues include G237 and G312. G237 and G312 together coordinate ATP. CDP is bound by residues G337 and F342. F342 serves as a coordination point for ADP. Residue E343 participates in AMP binding. ATP is bound by residues E343, D374, and T375. A Mg(2+)-binding site is contributed by D374.

The protein belongs to the phosphoglycerate kinase family. As to quaternary structure, monomer. The cofactor is Mg(2+).

It is found in the cytoplasm. It localises to the mitochondrion. The catalysed reaction is (2R)-3-phosphoglycerate + ATP = (2R)-3-phospho-glyceroyl phosphate + ADP. It functions in the pathway carbohydrate degradation; glycolysis; pyruvate from D-glyceraldehyde 3-phosphate: step 2/5. In terms of biological role, catalyzes one of the two ATP producing reactions in the glycolytic pathway via the reversible conversion of 1,3-diphosphoglycerate to 3-phosphoglycerate. Both L- and D- forms of purine and pyrimidine nucleotides can be used as substrates, but the activity is much lower on pyrimidines. Negatively regulates the biosynthesis of acetyl-CoA from pyruvate in the mitochondrion. The chain is Phosphoglycerate kinase 2 (PGK2) from Rhizopus niveus.